Reading from the N-terminus, the 219-residue chain is Ribose-5-phosphate isomerase A (219 aa).

Substrate is bound by residues 28–31 (SGST), 81–84 (DGAD), and 94–97 (KGGG). The active-site Proton acceptor is Glu-103. Residue Lys-121 coordinates substrate.

The protein belongs to the ribose 5-phosphate isomerase family. In terms of assembly, homodimer.

It catalyses the reaction aldehydo-D-ribose 5-phosphate = D-ribulose 5-phosphate. It participates in carbohydrate degradation; pentose phosphate pathway; D-ribose 5-phosphate from D-ribulose 5-phosphate (non-oxidative stage): step 1/1. Its function is as follows. Catalyzes the reversible conversion of ribose-5-phosphate to ribulose 5-phosphate. In Actinobacillus pleuropneumoniae serotype 3 (strain JL03), this protein is Ribose-5-phosphate isomerase A.